Consider the following 30-residue polypeptide: Cyclotide psyleio E (30 aa).

Residues 1–30 (SVTPIVCGETCFGGTCNTPGCSCSWPICTK) constitute a cross-link (cyclopeptide (Ser-Lys)). 3 cysteine pairs are disulfide-bonded: Cys7-Cys21, Cys11-Cys23, and Cys16-Cys28.

This is a cyclic peptide.

Probably participates in a plant defense mechanism. The protein is Cyclotide psyleio E of Psychotria leiocarpa.